Consider the following 202-residue polypeptide: Cilia- and flagella-associated protein 418 (202 aa).

A disordered region spans residues 71-90 (DVDTPTSTHEPSPAKASSSA). Residues 74 to 90 (TPTSTHEPSPAKASSSA) show a composition bias toward polar residues.

Ubiquitously expressed during early development and in adult tissues including the eye, brain, heart and kidney.

The protein resides in the cytoplasm. The protein localises to the photoreceptor inner segment. Its function is as follows. May be involved in photoreceptor outer segment disk morphogenesis. This chain is Cilia- and flagella-associated protein 418 (cfap418), found in Danio rerio (Zebrafish).